A 189-amino-acid polypeptide reads, in one-letter code: Probable nicotinate-nucleotide adenylyltransferase (189 aa).

This sequence belongs to the NadD family.

The catalysed reaction is nicotinate beta-D-ribonucleotide + ATP + H(+) = deamido-NAD(+) + diphosphate. It participates in cofactor biosynthesis; NAD(+) biosynthesis; deamido-NAD(+) from nicotinate D-ribonucleotide: step 1/1. Its function is as follows. Catalyzes the reversible adenylation of nicotinate mononucleotide (NaMN) to nicotinic acid adenine dinucleotide (NaAD). This Bacillus licheniformis (strain ATCC 14580 / DSM 13 / JCM 2505 / CCUG 7422 / NBRC 12200 / NCIMB 9375 / NCTC 10341 / NRRL NRS-1264 / Gibson 46) protein is Probable nicotinate-nucleotide adenylyltransferase.